We begin with the raw amino-acid sequence, 235 residues long: Segregation and condensation protein A (235 aa).

It belongs to the ScpA family. As to quaternary structure, component of a cohesin-like complex composed of ScpA, ScpB and the Smc homodimer, in which ScpA and ScpB bind to the head domain of Smc. The presence of the three proteins is required for the association of the complex with DNA.

The protein resides in the cytoplasm. Participates in chromosomal partition during cell division. May act via the formation of a condensin-like complex containing Smc and ScpB that pull DNA away from mid-cell into both cell halves. This is Segregation and condensation protein A from Streptococcus equi subsp. equi (strain 4047).